Consider the following 198-residue polypeptide: Recombination protein RecR (198 aa).

The C4-type zinc-finger motif lies at 57–72 (CSVCGHITDTDPCYIC). A Toprim domain is found at 80 to 175 (SMICVVEETK…KVTRLAHGLP (96 aa)).

The protein belongs to the RecR family.

In terms of biological role, may play a role in DNA repair. It seems to be involved in an RecBC-independent recombinational process of DNA repair. It may act with RecF and RecO. The chain is Recombination protein RecR from Macrococcus caseolyticus (strain JCSC5402) (Macrococcoides caseolyticum).